A 1123-amino-acid polypeptide reads, in one-letter code: Probable serine/threonine-protein kinase nek3 (1123 aa).

One can recognise a Protein kinase domain in the interval 4–264 (YEEIKTIGKG…VNDILELPFI (261 aa)). Residues 10–18 (IGKGSFGRA) and K33 each bind ATP. The active-site Proton acceptor is the D130. 2 stretches are compositionally biased toward low complexity: residues 283–307 (NNDSLNISNNSSGSNNSASNNISSS) and 327–415 (NNNN…TSLK). 6 disordered regions span residues 283 to 310 (NNDSLNISNNSSGSNNSASNNISSSTEV), 325 to 415 (NINN…TSLK), 440 to 802 (SKTP…TNSQ), 866 to 887 (SASTASTASTTNTTLTSGTNTM), 908 to 937 (SVKLSSKSSSPIKTSSSSSSSSSSSSSITD), and 990 to 1020 (SLNNSLTSSSSSIITNQNNQNNQNNQNNQNN). Polar residues predominate over residues 440 to 459 (SKTPISGTKNPTTSKITPSI). 4 stretches are compositionally biased toward low complexity: residues 478 to 529 (SKPT…SSSV), 557 to 576 (SNLSSQISSSSSSSSSSNSQ), 588 to 617 (SPTSTSTKSPTNPSPTLSSSSSLPKSSLKS), and 642 to 653 (NGNSNVNSTVLN). Residues 654 to 665 (RSVSSLSIQHKP) are compositionally biased toward polar residues. Composition is skewed to low complexity over residues 666–696 (TNSGSSSISSSSSGNNSNSNTTTNNNTTSTT), 712–738 (STPTSISTSNKSTTTTPTSSRSNTPST), and 752–802 (SSNG…TNSQ). Over residues 908–935 (SVKLSSKSSSPIKTSSSSSSSSSSSSSI) the composition is skewed to low complexity.

It belongs to the protein kinase superfamily. NEK Ser/Thr protein kinase family. NIMA subfamily.

The enzyme catalyses L-seryl-[protein] + ATP = O-phospho-L-seryl-[protein] + ADP + H(+). It catalyses the reaction L-threonyl-[protein] + ATP = O-phospho-L-threonyl-[protein] + ADP + H(+). The chain is Probable serine/threonine-protein kinase nek3 (nek3) from Dictyostelium discoideum (Social amoeba).